The following is a 20-amino-acid chain: Non-secretory ribonuclease (20 aa).

Histidine 16 acts as the Proton acceptor in catalysis.

Belongs to the pancreatic ribonuclease family. Interacts with and forms a tight 1:1 complex with RNH1. Dimerization of two such complexes may occur.

Its subcellular location is the lysosome. The protein resides in the cytoplasmic granule. It catalyses the reaction an [RNA] containing cytidine + H2O = an [RNA]-3'-cytidine-3'-phosphate + a 5'-hydroxy-ribonucleotide-3'-[RNA].. The catalysed reaction is an [RNA] containing uridine + H2O = an [RNA]-3'-uridine-3'-phosphate + a 5'-hydroxy-ribonucleotide-3'-[RNA].. This is a non-secretory ribonuclease. It is a pyrimidine specific nuclease with a slight preference for U. Cytotoxin and helminthotoxin. Possesses a wide variety of biological activities. The polypeptide is Non-secretory ribonuclease (RNASE2) (Sus scrofa (Pig)).